The following is a 426-amino-acid chain: Serine--tRNA ligase (426 aa).

231–233 (TSE) is an L-serine binding site. Position 262 to 264 (262 to 264 (RSE)) interacts with ATP. An L-serine-binding site is contributed by Glu285. Residue 349–352 (EISS) coordinates ATP. Ser385 serves as a coordination point for L-serine.

This sequence belongs to the class-II aminoacyl-tRNA synthetase family. Type-1 seryl-tRNA synthetase subfamily. Homodimer. The tRNA molecule binds across the dimer.

It localises to the cytoplasm. It carries out the reaction tRNA(Ser) + L-serine + ATP = L-seryl-tRNA(Ser) + AMP + diphosphate + H(+). It catalyses the reaction tRNA(Sec) + L-serine + ATP = L-seryl-tRNA(Sec) + AMP + diphosphate + H(+). The protein operates within aminoacyl-tRNA biosynthesis; selenocysteinyl-tRNA(Sec) biosynthesis; L-seryl-tRNA(Sec) from L-serine and tRNA(Sec): step 1/1. In terms of biological role, catalyzes the attachment of serine to tRNA(Ser). Is also able to aminoacylate tRNA(Sec) with serine, to form the misacylated tRNA L-seryl-tRNA(Sec), which will be further converted into selenocysteinyl-tRNA(Sec). This is Serine--tRNA ligase from Legionella pneumophila (strain Corby).